A 253-amino-acid chain; its full sequence is Probable glutathione transferase omega-2 (253 aa).

Residues 25 to 105 enclose the GST N-terminal domain; the sequence is GIYRIYNMRF…YLDDLFPESR (81 aa). Cys-35 functions as the Nucleophile in the catalytic mechanism. Glutathione contacts are provided by residues Lys-62, Val-75, and 89–90; that span reads ES. One can recognise a GST C-terminal domain in the interval 110–238; that stretch reads DPYEKVQQKL…SQPTEMGVGF (129 aa).

The protein belongs to the GST superfamily. Omega family.

It catalyses the reaction RX + glutathione = an S-substituted glutathione + a halide anion + H(+). The catalysed reaction is L-dehydroascorbate + 2 glutathione = glutathione disulfide + L-ascorbate. It carries out the reaction methylarsonate + 2 glutathione + H(+) = methylarsonous acid + glutathione disulfide + H2O. Functionally, exhibits glutathione-dependent thiol transferase activity. Has dehydroascorbate reductase activity and may contribute to the recycling of ascorbic acid. Participates in the biotransformation of inorganic arsenic and reduces monomethylarsonic acid (MMA). This Caenorhabditis briggsae protein is Probable glutathione transferase omega-2.